The following is a 246-amino-acid chain: uncharacterized protein (246 aa).

The next 4 membrane-spanning stretches (helical) occupy residues 32–52 (TLFFVRALIVTGFYLSIVGFI), 69–89 (IIAIVLAFIAGRVFCGWMCPF), 121–141 (IYFKYVVLILVVLAYLSGVKI), and 146–166 (LAYLLLALFLVLGFIYPMFFC). 2 consecutive 4Fe-4S ferredoxin-type domains span residues 185 to 213 (FKLKLDENKCVGCRLCERKCPMQIKITEK) and 210 to 239 (ITEKIDQMECIRCFECMSVCKKGALSFSAF). Positions 194, 197, 200, 204, 219, 222, 225, and 229 each coordinate [4Fe-4S] cluster.

The protein resides in the cell membrane. This is an uncharacterized protein from Methanocaldococcus jannaschii (strain ATCC 43067 / DSM 2661 / JAL-1 / JCM 10045 / NBRC 100440) (Methanococcus jannaschii).